The sequence spans 279 residues: Alcohol dehydrogenase-related 31 kDa protein (279 aa).

An NAD(+)-binding site is contributed by 11 to 34; that stretch reads YVADCGGIALETSKVLMTKNIAKL. Substrate is bound at residue S139. Y152 functions as the Proton acceptor in the catalytic mechanism.

The protein belongs to the short-chain dehydrogenases/reductases (SDR) family.

In Drosophila guanche (Fruit fly), this protein is Alcohol dehydrogenase-related 31 kDa protein (Adhr).